The sequence spans 145 residues: HTH-type transcriptional regulator MhqR (145 aa).

The HTH marR-type domain maps to 5 to 137 (SLKLFIVLSR…CTEMLKRVGL (133 aa)). The segment at residues 51–74 (LQQIGDKILLASGSITYVVDKLEQ) is a DNA-binding region (H-T-H motif).

Negatively regulates mhqA, mhqED, mhqNOP, and azoR2 which may contribute to the degradation of aromatic compounds. The chain is HTH-type transcriptional regulator MhqR (mhqR) from Bacillus subtilis (strain 168).